The primary structure comprises 333 residues: Fe(3+)-citrate import system permease protein YfmE (333 aa).

Helical transmembrane passes span 12-32, 65-85, 95-115, 120-140, 194-214, 238-258, 279-299, and 306-326; these read LLAI…SIGI, IILA…LQGV, VVGI…IFPE, VLPF…LMIA, EVKL…ILIP, FILI…VGSI, YLLP…DTLG, and VEIP…LYLL.

The protein belongs to the binding-protein-dependent transport system permease family. FecCD subfamily. As to quaternary structure, the complex is composed of one ATP-binding protein (YfmF), two transmembrane proteins (YfmD and YfmE) and a solute-binding protein (YfmC).

The protein resides in the cell membrane. In terms of biological role, part of the ABC transporter complex YfmCDEF involved in citrate-dependent Fe(3+) import. Involved in the translocation of the substrate across the membrane. The sequence is that of Fe(3+)-citrate import system permease protein YfmE (yfmE) from Bacillus subtilis (strain 168).